A 381-amino-acid polypeptide reads, in one-letter code: Phospholipid scramblase family protein C343.06c (381 aa).

Positions Gln336 to Gln369 are disordered. Residues Glu344–Pro359 show a composition bias toward polar residues.

It belongs to the phospholipid scramblase family.

Its subcellular location is the mitochondrion. This chain is Phospholipid scramblase family protein C343.06c, found in Schizosaccharomyces pombe (strain 972 / ATCC 24843) (Fission yeast).